We begin with the raw amino-acid sequence, 1010 residues long: Probable LRR receptor-like serine/threonine-protein kinase At3g47570 (1010 aa).

Positions 1–19 (MRLFLLLAFNALMLLETHG) are cleaved as a signal peptide. The Extracellular portion of the chain corresponds to 20 to 645 (FTDETDRQAL…SSRLKKVVIG (626 aa)). N48 and N88 each carry an N-linked (GlcNAc...) asparagine glycan. LRR repeat units follow at residues 89–113 (LSFL…VGQL), 114–137 (SRLE…LYNC), 139–161 (RLLN…LGSL), 162–185 (TNLV…LGNL), 186–209 (TLLE…VAQL), 211–233 (QIWS…LYNL), 234–258 (SSLK…GILL), 259–282 (PNLL…LSNI), 283–307 (STLE…NVPN), and 310–333 (LLFL…TSLT). A glycan (N-linked (GlcNAc...) asparagine) is linked at N136. N184 carries N-linked (GlcNAc...) asparagine glycosylation. N221 and N232 each carry an N-linked (GlcNAc...) asparagine glycan. Residues N281 and N294 are each glycosylated (N-linked (GlcNAc...) asparagine). N-linked (GlcNAc...) asparagine glycosylation is found at N334 and N358. LRR repeat units follow at residues 335-359 (CTQL…IANL), 361-384 (AKLV…IGNL), 385-408 (INLQ…LGKL), 410-432 (NLRY…IGNM), 433-455 (TMLE…SLGN), 457-480 (SHLL…IMKI), 481-504 (QQLL…IGAL), 505-528 (QNLG…LGNC), 530-551 (TMES…LKGL), 552-574 (VGVK…YFAS), and 575-600 (FSKL…IFEN). N-linked (GlcNAc...) asparagine glycans are attached at residues N431, N455, and N470. 2 N-linked (GlcNAc...) asparagine glycosylation sites follow: N582 and N600. Residues 646–666 (VSVGITLLLLLFMASVTLIWL) traverse the membrane as a helical segment. Residues 667–1010 (RKRKKNKETN…FFKASRTTWR (344 aa)) are Cytoplasmic-facing. T699 carries the phosphothreonine modification. In terms of domain architecture, Protein kinase spans 702–1002 (FSSSNMVGSG…ELISIRERFF (301 aa)). Residues 708–716 (VGSGSFGTV) and K731 each bind ATP. Phosphotyrosine occurs at positions 781 and 826. D839 functions as the Proton acceptor in the catalytic mechanism. The residue at position 887 (Y887) is a Phosphotyrosine.

This sequence belongs to the protein kinase superfamily. Ser/Thr protein kinase family.

It is found in the cell membrane. The enzyme catalyses L-seryl-[protein] + ATP = O-phospho-L-seryl-[protein] + ADP + H(+). It catalyses the reaction L-threonyl-[protein] + ATP = O-phospho-L-threonyl-[protein] + ADP + H(+). The sequence is that of Probable LRR receptor-like serine/threonine-protein kinase At3g47570 from Arabidopsis thaliana (Mouse-ear cress).